The following is a 549-amino-acid chain: Hydroxylamine reductase (549 aa).

[4Fe-4S] cluster is bound by residues Cys-5, Cys-8, Cys-17, and Cys-23. His-244, Glu-268, Cys-312, Cys-403, Cys-431, Cys-456, Glu-491, and Lys-493 together coordinate hybrid [4Fe-2O-2S] cluster. Cys-403 is modified (cysteine persulfide).

It belongs to the HCP family. [4Fe-4S] cluster is required as a cofactor. The cofactor is hybrid [4Fe-2O-2S] cluster.

The protein localises to the cytoplasm. The catalysed reaction is A + NH4(+) + H2O = hydroxylamine + AH2 + H(+). Catalyzes the reduction of hydroxylamine to form NH(3) and H(2)O. In Clostridium perfringens (strain 13 / Type A), this protein is Hydroxylamine reductase.